Here is a 330-residue protein sequence, read N- to C-terminus: Homeobox protein Hox-C13 (330 aa).

The span at 30–47 (GGGGGGGGGTGGAGGGCS) shows a compositional bias: gly residues. The disordered stretch occupies residues 30 to 50 (GGGGGGGGGTGGAGGGCSGAS). A DNA-binding region (homeobox) is located at residues 260–319 (GRKKRVPYTKVQLKELEKEYAASKFITKEKRRRISATTNLSERQVTIWFQNRRVKEKKVV).

This sequence belongs to the Abd-B homeobox family.

Its subcellular location is the nucleus. Functionally, transcription factor which plays a role in hair follicle differentiation. Regulates FOXQ1 expression and that of other hair-specific genes. The sequence is that of Homeobox protein Hox-C13 (HOXC13) from Homo sapiens (Human).